The primary structure comprises 187 residues: Elongation factor P (187 aa).

This sequence belongs to the elongation factor P family.

It is found in the cytoplasm. It participates in protein biosynthesis; polypeptide chain elongation. Functionally, involved in peptide bond synthesis. Stimulates efficient translation and peptide-bond synthesis on native or reconstituted 70S ribosomes in vitro. Probably functions indirectly by altering the affinity of the ribosome for aminoacyl-tRNA, thus increasing their reactivity as acceptors for peptidyl transferase. This is Elongation factor P from Synechococcus sp. (strain CC9311).